The primary structure comprises 282 residues: Ribosome biogenesis GTPase A (282 aa).

A CP-type G domain is found at 14–178; it reads RREVTEKLKL…LLDTPGILWP (165 aa). GTP contacts are provided by residues 58–61, 86–87, 130–135, and Gly174; these read NKAD, NS, and NVGKST.

It belongs to the TRAFAC class YlqF/YawG GTPase family. MTG1 subfamily. As to quaternary structure, interacts with ctc. Interacts with the immature 50S ribosome subunit. 2 molecules of RbgA bind to one 50S subunit.

It localises to the cytoplasm. Essential protein that is required for a late step of 50S ribosomal subunit assembly. Has GTPase activity that is stimulated by interaction with the immature 50S ribosome subunit. Binds to the 23S rRNA. Required for the association of ribosomal proteins RplP and RpmA with the large subunit. This Bacillus subtilis (strain 168) protein is Ribosome biogenesis GTPase A (rbgA).